The sequence spans 162 residues: AP-1 complex subunit sigma-2 (162 aa).

Belongs to the adaptor complexes small subunit family. In terms of assembly, adaptor protein complex 1 (AP-1) is a heterotetramer composed of two large adaptins (gamma-type subunit and beta-type subunit), a medium adaptin (mu-type subunit) and a small adaptin (sigma-type subunit). Expressed in roots, stems, leaves, flowers and siliques (developing fruits and seeds).

It is found in the golgi apparatus. Its subcellular location is the cytoplasmic vesicle. The protein resides in the clathrin-coated vesicle membrane. In terms of biological role, subunit of clathrin-associated adaptor protein complex 1 that plays a role in protein sorting at the trans-Golgi network and early endosomes (TGN/EE). The AP complexes mediate the recruitment of clathrin to membranes and the recognition of sorting signals within the cytosolic tails of transmembrane cargo molecules. The polypeptide is AP-1 complex subunit sigma-2 (AAP19-2) (Arabidopsis thaliana (Mouse-ear cress)).